Consider the following 393-residue polypeptide: S-adenosylmethionine decarboxylase proenzyme (393 aa).

Residues E11 and E14 contribute to the active site. S71 (schiff-base intermediate with substrate; via pyruvic acid) is an active-site residue. At S71 the chain carries Pyruvic acid (Ser); by autocatalysis. Catalysis depends on C85, which acts as the Proton donor; for catalytic activity. Active-site proton acceptor; for processing activity residues include S236 and H249.

This sequence belongs to the eukaryotic AdoMetDC family. It depends on pyruvate as a cofactor. In terms of processing, is synthesized initially as an inactive proenzyme. Formation of the active enzyme involves a self-maturation process in which the active site pyruvoyl group is generated from an internal serine residue via an autocatalytic post-translational modification. Two non-identical subunits are generated from the proenzyme in this reaction, and the pyruvate is formed at the N-terminus of the alpha chain, which is derived from the carboxyl end of the proenzyme. The post-translation cleavage follows an unusual pathway, termed non-hydrolytic serinolysis, in which the side chain hydroxyl group of the serine supplies its oxygen atom to form the C-terminus of the beta chain, while the remainder of the serine residue undergoes an oxidative deamination to produce ammonia and the pyruvoyl group blocking the N-terminus of the alpha chain.

It carries out the reaction S-adenosyl-L-methionine + H(+) = S-adenosyl 3-(methylsulfanyl)propylamine + CO2. Its pathway is amine and polyamine biosynthesis; S-adenosylmethioninamine biosynthesis; S-adenosylmethioninamine from S-adenosyl-L-methionine: step 1/1. This is S-adenosylmethionine decarboxylase proenzyme (SAMDC) from Hordeum chilense (Barley).